Reading from the N-terminus, the 75-residue chain is Exodeoxyribonuclease 7 small subunit (75 aa).

The protein belongs to the XseB family. In terms of assembly, heterooligomer composed of large and small subunits.

The protein resides in the cytoplasm. The enzyme catalyses Exonucleolytic cleavage in either 5'- to 3'- or 3'- to 5'-direction to yield nucleoside 5'-phosphates.. In terms of biological role, bidirectionally degrades single-stranded DNA into large acid-insoluble oligonucleotides, which are then degraded further into small acid-soluble oligonucleotides. This Chlamydia pneumoniae (Chlamydophila pneumoniae) protein is Exodeoxyribonuclease 7 small subunit.